The sequence spans 247 residues: DASH complex subunit DUO1 (247 aa).

Ser2 carries the N-acetylserine modification. Disordered stretches follow at residues 27-47 (LNNT…DNIS) and 172-247 (NRKG…KMFR). Positions 152–180 (LHNVIALKKKEILDLRQKLENRKGEKDAA) form a coiled coil. Positions 232 to 247 (NRWTKPTASSSRKMFR) are enriched in polar residues.

Belongs to the DASH complex DUO1 family. In terms of assembly, component of the DASH complex consisting of ASK1, DAD1, DAD2, DAD3, DAD4, DAM1, DUO1, HSK3, SPC19 and SPC34, with a stoichiometry of one copy of each subunit per complex. Multiple DASH complexes oligomerize to form a ring that encircles spindle microtubules and organizes the rod-like NDC80 complexes of the outer kinetochore. DASH complex oligomerization strengthens microtubule attachments. On cytoplasmic microtubules, DASH complexes appear to form patches instead of rings. Within the complex, DAM1 and DUO1 may form the microtubule connections.

Its subcellular location is the nucleus. It is found in the cytoplasm. It localises to the cytoskeleton. The protein resides in the spindle pole. The protein localises to the chromosome. Its subcellular location is the centromere. It is found in the kinetochore. Its function is as follows. Component of the DASH complex that connects microtubules with kinetochores and couples microtubule depolymerisation to chromosome movement; it is involved in retrieving kinetochores to the spindle poles before their re-orientation on the spindle in early mitosis and allows microtubule depolymerization to pull chromosomes apart and resist detachment during anaphase. Kinetochores, consisting of a centromere-associated inner segment and a microtubule-contacting outer segment, play a crucial role in chromosome segregation by mediating the physical connection between centromeric DNA and microtubules. Kinetochores also serve as an input point for the spindle assembly checkpoint, which delays anaphase until all chromosomes have bioriented on the mitotic spindle. During spindle-kinetochore attachment, kinetochores first attach to the lateral surface of spindle microtubules, which supports the congression of chromosomes toward the middle of the dividing cell; they then slide along towards the spindle pole, a process independent of the DASH complex but requiring the NDC80 complex. When the end of a disassembling microtubule reaches the laterally attached kinetochore, the DASH complex together with the NDC80 complex and STU2 convert lateral attachment to end-on capture to produce a structure that can track with microtubule shortening and sustain attachment when tension is applied across sister kinetochores upon their biorientation. Microtubule depolymerization proceeds by protofilament splaying and induces the kinetochore-attached DASH complex to slide longitudinally, thereby helping to transduce depolymerization energy into pulling forces to disjoin chromatids. Incorrect microtubule attachments are corrected by releasing microubules from the kinetochore through phosphorylation by IPL1 of kinetochore components. Links the microtubule cytoskeleton to chromosomes during interphase. Also contributes to the poleward transport of kinetochores on microtubules following centromeric DNA replication in S-phase. This is DASH complex subunit DUO1 (DUO1) from Saccharomyces cerevisiae (strain ATCC 204508 / S288c) (Baker's yeast).